A 164-amino-acid chain; its full sequence is Glutamate uptake regulatory protein (164 aa).

An HTH asnC-type domain is found at 5-66; sequence LDDFDIKILD…LLDPQKIGLG (62 aa). A DNA-binding region (H-T-H motif) is located at residues 24 to 43; the sequence is MAELSEKTGLSANACWRRIR.

Represses the secondary, H(+)-coupled glutamate uptake system (Gluemp) genes. The sequence is that of Glutamate uptake regulatory protein (grp) from Zymomonas mobilis subsp. mobilis (strain ATCC 31821 / ZM4 / CP4).